The sequence spans 799 residues: Sodium- and chloride-dependent glycine transporter 2 (799 aa).

A disordered region spans residues M1–F64. The Cytoplasmic segment spans residues M1–D201. The segment covering P40–A57 has biased composition (low complexity). Phosphoserine is present on S58. Position 59 is a phosphothreonine (T59). S86 carries the post-translational modification Phosphoserine. A run of 3 helical transmembrane segments spans residues F202 to L222, A230 to L249, and G273 to I293. Na(+) contacts are provided by G208, A210, V211, and N215. Topologically, residues C294–R395 are extracellular. The cysteines at positions 313 and 322 are disulfide-linked. N-linked (GlcNAc...) asparagine glycans are attached at residues N345, N355, N360, and N366. A run of 5 helical transmembrane segments spans residues W396 to A414, V423 to I440, I476 to Y493, L505 to I526, and L559 to L578. Na(+)-binding residues include S479, N511, L576, and D579. 4 consecutive transmembrane segments (helical) span residues V606 to T624, S640 to L660, V681 to Y700, and L719 to I737. Topologically, residues K738–C799 are cytoplasmic.

It belongs to the sodium:neurotransmitter symporter (SNF) (TC 2.A.22) family. SLC6A5 subfamily. Post-translationally, N-glycosylated. Specifically expressed in spinal cord, brain stem, and to a lesser extent in the cerebellum.

It localises to the cell membrane. It catalyses the reaction glycine(out) + chloride(out) + 3 Na(+)(out) = glycine(in) + chloride(in) + 3 Na(+)(in). Its function is as follows. Sodium- and chloride-dependent glycine transporter. Terminates the action of glycine by its high affinity sodium-dependent reuptake into presynaptic terminals. May be responsible for the termination of neurotransmission at strychnine-sensitive glycinergic synapses. In Rattus norvegicus (Rat), this protein is Sodium- and chloride-dependent glycine transporter 2 (Slc6a5).